A 473-amino-acid chain; its full sequence is Lysophospholipid acyltransferase 5 (473 aa).

The next 4 membrane-spanning stretches (helical) occupy residues 20–40 (LLIS…FFYN), 43–63 (AQHQ…FNCG), 66–86 (VIHP…MAGT), and 88–108 (ASIY…YWFH). Catalysis depends on residues asparagine 315 and histidine 351. A run of 3 helical transmembrane segments spans residues 341 to 361 (VITL…FLLF), 396 to 416 (FIWI…FLMF), and 431 to 451 (LYFI…MVLL). The short motif at 470–473 (KKEL) is the Di-lysine motif element.

It belongs to the membrane-bound acyltransferase family.

Its subcellular location is the endoplasmic reticulum membrane. The enzyme catalyses a 1-acyl-sn-glycero-3-phosphocholine + an acyl-CoA = a 1,2-diacyl-sn-glycero-3-phosphocholine + CoA. It catalyses the reaction a 1-acyl-sn-glycero-3-phospho-L-serine + an acyl-CoA = a 1,2-diacyl-sn-glycero-3-phospho-L-serine + CoA. It carries out the reaction a 1-acyl-sn-glycero-3-phosphoethanolamine + an acyl-CoA = a 1,2-diacyl-sn-glycero-3-phosphoethanolamine + CoA. The protein operates within lipid metabolism; phospholipid metabolism. Functionally, probable acyltransferase which may mediate the conversion of lysophosphatidylcholine (1-acyl-sn-glycero-3-phosphocholine or LPC) into phosphatidylcholine (1,2-diacyl-sn-glycero-3-phosphocholine or PC) (LPCAT activity). May also catalyze the conversion of lysophosphatidylethanolamine (1-acyl-2-hydroxy-sn-glycero-3-phosphoethanolamine or LPE) into phosphatidylethanolamine (1,2-diacyl-sn-glycero-3-phosphoethanolamine or PE) (LPEAT activity), as well as the conversion of lysophosphatidylserine (1-acyl-2-hydroxy-sn-glycero-3-phospho-L-serine or LPS) into phosphatidylserine (1,2-diacyl-sn-glycero-3-phospho-L-serine or PS) (LPSAT activity). Required for incorporation of arachidonic acid into PC, PE, and PS. This Caenorhabditis elegans protein is Lysophospholipid acyltransferase 5 (mboa-6).